The sequence spans 518 residues: Phosphoacetylglucosamine mutase 1 (518 aa).

At threonine 49 the chain carries Phosphothreonine. Serine 51 acts as the Phosphoserine intermediate in catalysis. Residues serine 51, aspartate 267, aspartate 269, and aspartate 271 each contribute to the Mg(2+) site. Serine 51 carries the phosphoserine modification. Substrate-binding positions include 360–362 (EAN), 486–490 (RASGT), and arginine 495.

This sequence belongs to the phosphohexose mutase family. Mg(2+) is required as a cofactor.

The protein resides in the cytoplasm. It is found in the nucleus. The enzyme catalyses N-acetyl-alpha-D-glucosamine 1-phosphate = N-acetyl-D-glucosamine 6-phosphate. Its pathway is nucleotide-sugar biosynthesis; UDP-N-acetyl-alpha-D-glucosamine biosynthesis; N-acetyl-alpha-D-glucosamine 1-phosphate from alpha-D-glucosamine 6-phosphate (route I): step 2/2. Functionally, catalyzes the conversion of GlcNAc-6-P into GlcNAc-1-P during the synthesis of uridine diphosphate/UDP-GlcNAc, which is a biosynthetic precursor of chitin and also supplies the amino sugars for N-linked oligosaccharides of glycoproteins. The sequence is that of Phosphoacetylglucosamine mutase 1 from Schizosaccharomyces pombe (strain 972 / ATCC 24843) (Fission yeast).